The following is a 78-amino-acid chain: Exodeoxyribonuclease 7 small subunit (78 aa).

This sequence belongs to the XseB family. Heterooligomer composed of large and small subunits.

It localises to the cytoplasm. The enzyme catalyses Exonucleolytic cleavage in either 5'- to 3'- or 3'- to 5'-direction to yield nucleoside 5'-phosphates.. Functionally, bidirectionally degrades single-stranded DNA into large acid-insoluble oligonucleotides, which are then degraded further into small acid-soluble oligonucleotides. This Mycobacterium leprae (strain TN) protein is Exodeoxyribonuclease 7 small subunit.